A 131-amino-acid chain; its full sequence is Methylglyoxal synthase (131 aa).

In terms of domain architecture, MGS-like spans 1 to 131 (MKIALIAHDK…GDLDYRKLRK (131 aa)). Substrate is bound by residues H8, K12, 34–37 (TGTT), and 54–55 (SG). The active-site Proton donor/acceptor is the D60. H87 lines the substrate pocket.

This sequence belongs to the methylglyoxal synthase family.

The catalysed reaction is dihydroxyacetone phosphate = methylglyoxal + phosphate. In terms of biological role, catalyzes the formation of methylglyoxal from dihydroxyacetone phosphate. The sequence is that of Methylglyoxal synthase from Bacillus mycoides (strain KBAB4) (Bacillus weihenstephanensis).